Here is a 249-residue protein sequence, read N- to C-terminus: Phosphate import ATP-binding protein PstB 1 (249 aa).

The ABC transporter domain occupies Phe4–Val244. Position 36–43 (Gly36–Ser43) interacts with ATP.

Belongs to the ABC transporter superfamily. Phosphate importer (TC 3.A.1.7) family. The complex is composed of two ATP-binding proteins (PstB), two transmembrane proteins (PstC and PstA) and a solute-binding protein (PstS).

It is found in the cell inner membrane. The catalysed reaction is phosphate(out) + ATP + H2O = ADP + 2 phosphate(in) + H(+). In terms of biological role, part of the ABC transporter complex PstSACB involved in phosphate import. Responsible for energy coupling to the transport system. The protein is Phosphate import ATP-binding protein PstB 1 of Aliivibrio fischeri (strain ATCC 700601 / ES114) (Vibrio fischeri).